The chain runs to 227 residues: Nitrobenzene nitroreductase (227 aa).

Position 14 to 18 (14 to 18) interacts with FMN; that stretch reads RRAKR. NADP(+) is bound by residues S44 and I109. FMN is bound by residues 172–173 and K215; that span reads VF.

It belongs to the nitroreductase family. As to quaternary structure, monomer. FMN is required as a cofactor.

It catalyses the reaction N-phenylhydroxylamine + 2 NADP(+) + H2O = nitrobenzene + 2 NADPH + 2 H(+). It functions in the pathway xenobiotic degradation; nitrobenzene degradation. With respect to regulation, inhibited by dicumarol, p-hydroxymercuribenzoate and salicyl hydroxamate. In terms of biological role, involved in the biodegradation of nitroaromatic compounds. Catalyzes the two-electron reduction of nitrobenzene (NB) to produce a nitrosobenzene (NOB) intermediate, which is immediately reduced to hydroxylaminobenzene (HAB) by a second two-electron transfer. Also active on menadione and nitrofurazone. Replacing NADPH with NADH results in a 4-fold decrease in the reaction rate. The polypeptide is Nitrobenzene nitroreductase (Ectopseudomonas oleovorans (Pseudomonas oleovorans)).